A 911-amino-acid chain; its full sequence is Envelope glycoprotein B (911 aa).

A signal peptide spans 1 to 30; the sequence is MRVCSEASPRRRQVTMLVSLLLFSAQAGFC. Topologically, residues 31-778 are virion surface; the sequence is ARSAAGHSGI…SGISSFLANP (748 aa). 5 disulfide bridges follow: C86–C543, C103–C499, C177–C239, C330–C378, and C566–C635. 2 N-linked (GlcNAc...) asparagine; by host glycosylation sites follow: N111 and N130. Residues 143-149 form an involved in fusion and/or binding to host membrane region; the sequence is TWKGFGL. N221 is a glycosylation site (N-linked (GlcNAc...) asparagine; by host). Positions 228 to 233 are involved in fusion and/or binding to host membrane; that stretch reads ALGYRT. Residues N347, N369, N384, N438, and N594 are each glycosylated (N-linked (GlcNAc...) asparagine; by host). The interval 591–610 is disordered; the sequence is RPANNSDVGGSQQAGEAEAQ. Over residues 599 to 610 the composition is skewed to low complexity; that stretch reads GGSQQAGEAEAQ. An N-linked (GlcNAc...) asparagine; by host glycan is attached at N662. The hydrophobic membrane proximal region stretch occupies residues 722–776; that stretch reads LDTALKFDDGLATLRAIGEFLTNTLGGAGKVLGNVVMGAAAAIISTVSGISSFLA. The chain crosses the membrane as a helical span at residues 779 to 799; the sequence is FAALGIGIAVIVCVIMGLLAF. The Intravirion segment spans residues 800 to 911; the sequence is RYVMTLRANP…EDYYYDDEHL (112 aa).

Belongs to the herpesviridae glycoprotein B family. Homotrimer; disulfide-linked. Binds to heparan sulfate proteoglycans. Interacts with gH/gL heterodimer.

It localises to the virion membrane. The protein resides in the host cell membrane. It is found in the host endosome membrane. The protein localises to the host Golgi apparatus membrane. Envelope glycoprotein that forms spikes at the surface of virion envelope. Essential for the initial attachment to heparan sulfate moieties of the host cell surface proteoglycans. Involved in fusion of viral and cellular membranes leading to virus entry into the host cell. Following initial binding to its host receptors, membrane fusion is mediated by the fusion machinery composed at least of gB and the heterodimer gH/gL. May be involved in the fusion between the virion envelope and the outer nuclear membrane during virion egress. This chain is Envelope glycoprotein B, found in Amazona oratrix (yellow-headed parrot).